Here is a 566-residue protein sequence, read N- to C-terminus: Membrane protein insertase YidC (566 aa).

The chain crosses the membrane as a helical span at residues 6–26 (NLLLLALLFVSFLLYTAWVEE). The tract at residues 30 to 80 (QVAPQVQTEQVDSSVPASVASSANSANLSDGVPNSPQQSSTDATSTELPAS) is disordered. Positions 31–41 (VAPQVQTEQVD) are enriched in polar residues. Residues 42 to 58 (SSVPASVASSANSANLS) are compositionally biased toward low complexity. Over residues 61–80 (VPNSPQQSSTDATSTELPAS) the composition is skewed to polar residues. Helical transmembrane passes span 356–376 (LLLFFQGIVGNWGVAIILITF), 433–453 (LGGCFPILLQMPIFIALYWSL), 471–491 (LSVQDPYYILPILMGVSMFFI), and 510–530 (FMPVIFTFFFLWFPAGLVLYW).

Belongs to the OXA1/ALB3/YidC family. Type 1 subfamily. As to quaternary structure, interacts with the Sec translocase complex via SecD. Specifically interacts with transmembrane segments of nascent integral membrane proteins during membrane integration.

The protein resides in the cell inner membrane. Functionally, required for the insertion and/or proper folding and/or complex formation of integral membrane proteins into the membrane. Involved in integration of membrane proteins that insert both dependently and independently of the Sec translocase complex, as well as at least some lipoproteins. Aids folding of multispanning membrane proteins. The protein is Membrane protein insertase YidC of Psychromonas ingrahamii (strain DSM 17664 / CCUG 51855 / 37).